Here is a 247-residue protein sequence, read N- to C-terminus: V-type proton ATPase subunit D (247 aa).

The protein belongs to the V-ATPase D subunit family. In terms of assembly, V-ATPase is a heteromultimeric enzyme made up of two complexes: the ATP-hydrolytic V1 complex and the proton translocation V0 complex. The V1 complex consists of three catalytic AB heterodimers that form a heterohexamer, three peripheral stalks each consisting of EG heterodimers, one central rotor including subunits D and F, and the regulatory subunits C and H. The proton translocation complex V0 consists of the proton transport subunit a, a ring of proteolipid subunits c9c'', rotary subunit d, subunits e and f, and the accessory subunits ATP6AP1/Ac45 and ATP6AP2/PRR. Interacts with SNX10.

The protein resides in the membrane. It is found in the cytoplasmic vesicle. Its subcellular location is the clathrin-coated vesicle membrane. It localises to the cytoplasm. The protein localises to the cytoskeleton. The protein resides in the microtubule organizing center. It is found in the centrosome. Its subcellular location is the cell projection. It localises to the cilium. In terms of biological role, subunit of the V1 complex of vacuolar(H+)-ATPase (V-ATPase), a multisubunit enzyme composed of a peripheral complex (V1) that hydrolyzes ATP and a membrane integral complex (V0) that translocates protons. V-ATPase is responsible for acidifying and maintaining the pH of intracellular compartments and in some cell types, is targeted to the plasma membrane, where it is responsible for acidifying the extracellular environment. May play a role in cilium biogenesis through regulation of the transport and the localization of proteins to the cilium. This chain is V-type proton ATPase subunit D (Atp6v1d), found in Mus musculus (Mouse).